The sequence spans 310 residues: Acetyl-coenzyme A carboxylase carboxyl transferase subunit beta, chloroplastic (310 aa).

In terms of domain architecture, CoA carboxyltransferase N-terminal spans 47 to 310; that stretch reads LWARCDNCGN…LYLSVPYNKN (264 aa). Zn(2+) is bound by residues Cys-51, Cys-54, Cys-70, and Cys-73. Residues 51–73 form a C4-type zinc finger; it reads CDNCGNMLYVKFLKQNRSVCEEC.

Belongs to the AccD/PCCB family. In terms of assembly, acetyl-CoA carboxylase is a heterohexamer composed of biotin carboxyl carrier protein, biotin carboxylase and 2 subunits each of ACCase subunit alpha and ACCase plastid-coded subunit beta (accD). Zn(2+) is required as a cofactor.

The protein localises to the plastid. The protein resides in the chloroplast stroma. The catalysed reaction is N(6)-carboxybiotinyl-L-lysyl-[protein] + acetyl-CoA = N(6)-biotinyl-L-lysyl-[protein] + malonyl-CoA. It participates in lipid metabolism; malonyl-CoA biosynthesis; malonyl-CoA from acetyl-CoA: step 1/1. Component of the acetyl coenzyme A carboxylase (ACC) complex. Biotin carboxylase (BC) catalyzes the carboxylation of biotin on its carrier protein (BCCP) and then the CO(2) group is transferred by the transcarboxylase to acetyl-CoA to form malonyl-CoA. The protein is Acetyl-coenzyme A carboxylase carboxyl transferase subunit beta, chloroplastic of Adiantum capillus-veneris (Maidenhair fern).